The chain runs to 142 residues: Large ribosomal subunit protein uL16 (142 aa).

The protein belongs to the universal ribosomal protein uL16 family. As to quaternary structure, part of the 50S ribosomal subunit.

Functionally, binds 23S rRNA and is also seen to make contacts with the A and possibly P site tRNAs. This is Large ribosomal subunit protein uL16 from Gemmatimonas aurantiaca (strain DSM 14586 / JCM 11422 / NBRC 100505 / T-27).